The sequence spans 876 residues: Alanine--tRNA ligase (876 aa).

Residues His-560, His-564, Cys-662, and His-666 each coordinate Zn(2+).

Belongs to the class-II aminoacyl-tRNA synthetase family. It depends on Zn(2+) as a cofactor.

The protein localises to the cytoplasm. The catalysed reaction is tRNA(Ala) + L-alanine + ATP = L-alanyl-tRNA(Ala) + AMP + diphosphate. Catalyzes the attachment of alanine to tRNA(Ala) in a two-step reaction: alanine is first activated by ATP to form Ala-AMP and then transferred to the acceptor end of tRNA(Ala). Also edits incorrectly charged Ser-tRNA(Ala) and Gly-tRNA(Ala) via its editing domain. The chain is Alanine--tRNA ligase from Synechococcus sp. (strain ATCC 27144 / PCC 6301 / SAUG 1402/1) (Anacystis nidulans).